The sequence spans 144 residues: Transcriptional regulator SlyA (144 aa).

One can recognise an HTH marR-type domain in the interval 2 to 135 (ESPLGSDLAR…LSNMIAKLEK (134 aa)). A DNA-binding region (H-T-H motif) is located at residues 49–72 (QIQLAKAIGIEQPSLVRTLDQLEE).

Belongs to the SlyA family. As to quaternary structure, homodimer.

Functionally, transcription regulator that can specifically activate or repress expression of target genes. In Sodalis glossinidius (strain morsitans), this protein is Transcriptional regulator SlyA.